A 68-amino-acid polypeptide reads, in one-letter code: Large ribosomal subunit protein bL35 (68 aa).

It belongs to the bacterial ribosomal protein bL35 family.

In Wolbachia pipientis wMel, this protein is Large ribosomal subunit protein bL35.